The sequence spans 301 residues: Glycine--tRNA ligase alpha subunit (301 aa).

The protein belongs to the class-II aminoacyl-tRNA synthetase family. Tetramer of two alpha and two beta subunits.

It is found in the cytoplasm. The catalysed reaction is tRNA(Gly) + glycine + ATP = glycyl-tRNA(Gly) + AMP + diphosphate. The protein is Glycine--tRNA ligase alpha subunit of Actinobacillus pleuropneumoniae serotype 5b (strain L20).